The primary structure comprises 251 residues: Flap endonuclease Xni (251 aa).

Residue Asp-104 participates in Mg(2+) binding. The 5'-3' exonuclease domain occupies 160–250; sequence VLPRQLPDYW…SGNLQQLRLK (91 aa). Leu-171, Ala-172, Pro-180, Val-182, and Val-185 together coordinate K(+). Positions 184–189 are interaction with DNA; that stretch reads GVGAKT.

The protein belongs to the Xni family. It depends on Mg(2+) as a cofactor. K(+) serves as cofactor.

Its function is as follows. Has flap endonuclease activity. During DNA replication, flap endonucleases cleave the 5'-overhanging flap structure that is generated by displacement synthesis when DNA polymerase encounters the 5'-end of a downstream Okazaki fragment. This is Flap endonuclease Xni from Yersinia pestis bv. Antiqua (strain Nepal516).